Consider the following 166-residue polypeptide: Endoribonuclease YbeY (166 aa).

3 residues coordinate Zn(2+): His129, His133, and His139.

The protein belongs to the endoribonuclease YbeY family. Requires Zn(2+) as cofactor.

Its subcellular location is the cytoplasm. In terms of biological role, single strand-specific metallo-endoribonuclease involved in late-stage 70S ribosome quality control and in maturation of the 3' terminus of the 16S rRNA. The sequence is that of Endoribonuclease YbeY from Heliobacterium modesticaldum (strain ATCC 51547 / Ice1).